A 379-amino-acid chain; its full sequence is Presenilin-associated rhomboid-like protein, mitochondrial (379 aa).

The N-terminal 52 residues, 1–52 (MAWRGWAQRGWGCGQAWAASVGGRSCEELTAALTPPRLLGRRFNFFIQQKCG), are a transit peptide targeting the mitochondrion. Residues 53–101 (FRKAPRKVEPRRSDTGTSGEAYKRSALIPPVEETVFYPSPYPIRSLIKP) are Mitochondrial matrix-facing. The residue at position 65 (S65) is a Phosphoserine. The residue at position 69 (T69) is a Phosphothreonine. At S70 the chain carries Phosphoserine. A helical membrane pass occupies residues 102–121 (LFFTVGFTGCAFGSAAIWQY). At 122-167 (ESLKSRVQSYFDGIKADWLDSIRPQKEGDFRKEINKWWNNLSDGQR) the chain is on the mitochondrial intermembrane side. The chain crosses the membrane as a helical span at residues 168 to 187 (TVTGIIAANVLVFCLWRVPS). Over 188-207 (LQRTMIRYFTSNPASKVLCS) the chain is Mitochondrial matrix. Residues 208–230 (PMLLSTFSHFSLFHMAANMYVLW) form a helical membrane-spanning segment. Residues 231 to 244 (SFSSSIVNILGQEQ) are Mitochondrial intermembrane-facing. A helical membrane pass occupies residues 245–262 (FMAVYLSAGVISNFVSYV). Topologically, residues 263–273 (GKVATGRYGPS) are mitochondrial matrix. Residues 274-292 (LGASGAIMTVLAAVCTKIP) traverse the membrane as a helical segment. Catalysis depends on S277, which acts as the Nucleophile. The Mitochondrial intermembrane portion of the chain corresponds to 293-295 (EGR). The helical transmembrane segment at 296 to 318 (LAIIFLPMFTFTAGNALKAIIAM) threads the bilayer. The Mitochondrial matrix segment spans residues 319–332 (DTAGMILGWKFFDH). The chain crosses the membrane as a helical span at residues 333–354 (AAHLGGALFGIWYVTYGHELIW). Residue H335 is part of the active site. Over 355 to 379 (KNREPLVKIWHEIRTNGPKKGGGSK) the chain is Mitochondrial intermembrane.

This sequence belongs to the peptidase S54 family. As to quaternary structure, interacts with PSEN1 and PSEN2. Binds OPA1. P-beta is proteolytically processed (beta-cleavage) in a PARL-dependent manner.

It localises to the mitochondrion inner membrane. It is found in the nucleus. The enzyme catalyses Cleaves type-1 transmembrane domains using a catalytic dyad composed of serine and histidine that are contributed by different transmembrane domains.. Required for the control of apoptosis during postnatal growth. Essential for proteolytic processing of an antiapoptotic form of OPA1 which prevents the release of mitochondrial cytochrome c in response to intrinsic apoptotic signals. Required for the maturation of PINK1 into its 52kDa mature form after its cleavage by mitochondrial-processing peptidase (MPP). Promotes cleavage of serine/threonine-protein phosphatase PGAM5 in damaged mitochondria in response to loss of mitochondrial membrane potential. Mediates differential cleavage of PINK1 and PGAM5 depending on the health status of mitochondria, disassociating from PINK1 and associating with PGAM5 in response to mitochondrial membrane potential loss. Required for processing of CLPB into a form with higher protein disaggregase activity by removing an autoinhibitory N-terminal peptide. Promotes processing of DIABLO/SMAC in the mitochondrion which is required for DIABLO apoptotic activity. Also required for cleavage of STARD7 and TTC19. Promotes changes in mitochondria morphology regulated by phosphorylation of P-beta domain. This chain is Presenilin-associated rhomboid-like protein, mitochondrial (PARL), found in Pongo abelii (Sumatran orangutan).